The primary structure comprises 336 residues: Large ribosomal subunit protein uL10 (336 aa).

The disordered stretch occupies residues 292–336 (LKEKLSSRAAAPAPEEKEEEVEEEAEEEEEEEEEDAAAGLGALFG). Residues 307-327 (EKEEEVEEEAEEEEEEEEEDA) show a composition bias toward acidic residues.

It belongs to the universal ribosomal protein uL10 family. In terms of assembly, part of the 50S ribosomal subunit. Forms part of the ribosomal stalk which helps the ribosome interact with GTP-bound translation factors. Forms a heptameric L10(L12)2(L12)2(L12)2 complex, where L10 forms an elongated spine to which the L12 dimers bind in a sequential fashion.

In terms of biological role, forms part of the ribosomal stalk, playing a central role in the interaction of the ribosome with GTP-bound translation factors. The chain is Large ribosomal subunit protein uL10 from Methanothermobacter thermautotrophicus (strain ATCC 29096 / DSM 1053 / JCM 10044 / NBRC 100330 / Delta H) (Methanobacterium thermoautotrophicum).